A 97-amino-acid chain; its full sequence is DNA-binding protein NEQ150 (97 aa).

It belongs to the PDCD5 family.

The polypeptide is DNA-binding protein NEQ150 (Nanoarchaeum equitans (strain Kin4-M)).